Here is a 196-residue protein sequence, read N- to C-terminus: uncharacterized protein (196 aa).

Positions 1–23 (MSARAPKELRLALPPCLLNRTFA) are cleaved as a signal peptide. Residues Asn-19 and Asn-26 are each glycosylated (N-linked (GlcNAc...) asparagine). Topologically, residues 24–60 (SHNASGGSNAGIRSSGAGGGTCITQVGQQLFQSFSST) are extracellular. Residues 61-81 (LVLIVLVTLIFCLIVLSLSTF) traverse the membrane as a helical segment. The Cytoplasmic portion of the chain corresponds to 82–196 (HIHKRRMKKR…EGLLQTVVLS (115 aa)). The segment at 93–184 (MQRAQEEYER…AHAASSCLDT (92 aa)) is disordered. 2 stretches are compositionally biased toward basic and acidic residues: residues 95-106 (RAQEEYERDHCS) and 124-135 (HGKETRLERQPR). Pro residues predominate over residues 161 to 171 (CAPPPPPPVPS). The segment covering 172 to 181 (PHGAHAASSC) has biased composition (low complexity).

It is found in the membrane. This is an uncharacterized protein from Rattus norvegicus (Rat).